The following is a 628-amino-acid chain: Inactive sodium-dependent neutral amino acid transporter B(0)AT3 (628 aa).

Residues 1-26 (MAHAPEPDPAACDLGDERPKWDNKAQ) are Cytoplasmic-facing. A helical transmembrane segment spans residues 27–47 (YLLSCTGFAVGLGNIWRFPYL). Residues 48 to 51 (CQTY) are Extracellular-facing. A helical transmembrane segment spans residues 52–74 (GGGAFLIPYVIALVFEGIPIFHV). Topologically, residues 75-88 (ELAIGQRLRKGSVG) are cytoplasmic. Residues 89–111 (VWTAISPYLSGVGLGCVTLSFLI) traverse the membrane as a helical segment. Over 112 to 178 (SLYYNTIVAW…ITADINDSGS (67 aa)) the chain is Extracellular. Asn144, Asn168, and Asn174 each carry an N-linked (GlcNAc...) asparagine glycan. A helical membrane pass occupies residues 179–201 (IQWWLLICLAASWAVVYMCVIRG). The Cytoplasmic portion of the chain corresponds to 202-207 (IETTGK). A helical transmembrane segment spans residues 208 to 230 (VIYFTALFPYLVLTIFLIRGLTL). Over 231–253 (PGATKGLIYLFTPNMHILQNPRV) the chain is Extracellular. A helical membrane pass occupies residues 254–276 (WLDAATQIFFSLSLAFGGHIAFA). Over 277–288 (SYNSPRNDCQKD) the chain is Cytoplasmic. The helical transmembrane segment at 289–311 (AVVIALVNRMTSLYASIAVFSVL) threads the bilayer. Topologically, residues 312 to 399 (GFKATNDYEH…TETDLHMPGA (88 aa)) are extracellular. Residue Asn354 is glycosylated (N-linked (GlcNAc...) asparagine). A helical transmembrane segment spans residues 400–422 (PVWAMLFFGMLFTLGLSTMFGTV). Residues 423–442 (EAVITPLLDVGVLPRWVPKE) are Cytoplasmic-facing. Residues 443 to 465 (ALTGLVCLVCFLSATCFTLQSGN) form a helical membrane-spanning segment. The Extracellular segment spans residues 466 to 474 (YWLEIFDNF). The chain crosses the membrane as a helical span at residues 475–497 (AASPNLLMLAFLEVVGVVYVYGM). Over 498–517 (KRFCDDIAWMTGRRPSPYWR) the chain is Cytoplasmic. Residues 518-540 (LTWRVVSPLLLTIFVAYIILLFW) traverse the membrane as a helical segment. Over 541–568 (KPLRYKAWNPKYELFPSRQEKLYPGWAR) the chain is Extracellular. A helical membrane pass occupies residues 569–591 (AACVLLSLLPVLWVPVAALAQLL). The Cytoplasmic portion of the chain corresponds to 592 to 628 (TRRRRTWRDRDARPDTDMRPDTDTRPDTDMRPDTDMR). The disordered stretch occupies residues 602–628 (DARPDTDMRPDTDTRPDTDMRPDTDMR).

This sequence belongs to the sodium:neurotransmitter symporter (SNF) (TC 2.A.22) family. SLC6A18 subfamily. As to expression, abundantly expressed in kidney, but not in intestine.

Its subcellular location is the membrane. Does not show neutral amino acid transporter activity. The sequence is that of Inactive sodium-dependent neutral amino acid transporter B(0)AT3 from Homo sapiens (Human).